Reading from the N-terminus, the 236-residue chain is Ubiquitin carboxyl-terminal hydrolase YUH1 (236 aa).

Residues 7–233 (AVVPIESNPE…LNFAMLGLGP (227 aa)) enclose the UCH catalytic domain. The tract at residues 10 to 15 (PIESNP) is interaction with ubiquitin. The Nucleophile role is filled by Cys-90. Positions 149–157 (FSTGQSEAP) are interaction with ubiquitin. Catalysis depends on His-166, which acts as the Proton donor. The interaction with ubiquitin stretch occupies residues 219–228 (NEEDVLNFAM).

This sequence belongs to the peptidase C12 family.

It carries out the reaction Thiol-dependent hydrolysis of ester, thioester, amide, peptide and isopeptide bonds formed by the C-terminal Gly of ubiquitin (a 76-residue protein attached to proteins as an intracellular targeting signal).. Deubiquitinating enzyme (DUB) that controls levels of cellular ubiquitin through processing of ubiquitin precursors and ubiquitinated proteins. Thiol protease that recognizes and hydrolyzes a peptide bond at the C-terminal glycine of either ubiquitin or RUB1. Preferentially cleaves ubiquitin from peptides and small adducts. The protein is Ubiquitin carboxyl-terminal hydrolase YUH1 (YUH1) of Saccharomyces cerevisiae (strain ATCC 204508 / S288c) (Baker's yeast).